The following is a 455-amino-acid chain: Angiopoietin-related protein 3 (455 aa).

The N-terminal stretch at 1 to 16 (MHTIKLFLFVVPLVIA) is a signal peptide. Positions 17-165 (SRVDPDLSSF…QEHPEVTSLK (149 aa)) are sufficient to inhibit LPL lipase activity. A sufficient to inhibit LIPG/EL phospholipase activity region spans residues 17–207 (SRVDPDLSSF…EIEKQLRKTG (191 aa)). The tract at residues 32–56 (EPKSRFAMLDDVKILANGLLQLGHG) is required for inhibition of LPL lipase activity. Positions 85–206 (LSLRTNEIKE…KEIEKQLRKT (122 aa)) form a coiled coil. N-linked (GlcNAc...) asparagine glycosylation is present at Asn-115. Residues 202 to 242 (QLRKTGIQEPSENSLSSKSRAPRTTPPLQLNETENTEQDDL) form a disordered region. Positions 209-220 (QEPSENSLSSKS) are enriched in polar residues. Thr-226 carries O-linked (GlcNAc) threonine glycosylation. N-linked (GlcNAc...) asparagine glycosylation occurs at Asn-232. The region spanning 237–455 (TEQDDLPADC…SSKMMLQPTT (219 aa)) is the Fibrinogen C-terminal domain. Cys-246 and Cys-274 form a disulfide bridge. 2 N-linked (GlcNAc...) asparagine glycosylation sites follow: Asn-296 and Asn-357. A disulfide bridge links Cys-394 with Cys-408.

In terms of assembly, interacts with ANGPTL8. Interacts with ITGB3. In terms of processing, in part proteolytically cleaved by proprotein convertases; proposed to be involved in activation. In primary hepatocytes is intracellularily predominantly processed by FURIN and extracellularily by FURIN and PCSK6/PACE4. In 18.5 dpc embryos 75% of protein is found to be processed compared to 25 % in adults. In terms of tissue distribution, predominantly expressed in liver, weakly expressed in kidney and lung. Expressed in podocytes (at protein level). Expressed in hypothalamic neurons (at protein level). Expressed in bone marrow sinusoidal endothelial cells (at protein level).

It localises to the secreted. The protein resides in the cell projection. The protein localises to the lamellipodium. In terms of biological role, acts in part as a hepatokine that is involved in regulation of lipid and glucose metabolism. Proposed to play a role in the trafficking of energy substrates to either storage or oxidative tissues in response to food intake. Has a stimulatory effect on plasma triglycerides (TG), which is achieved by suppressing plasma TG clearance via inhibition of LPL activity; the function seems to be specific for the feeding conditions. The inhibition of LPL activity appears to be an indirect mechanism involving recruitment of proprotein convertases PCSK6 and FURIN to LPL leading to cleavage and dissociation of LPL from the cell surface; the function does not require ANGPTL3 proteolytic cleavage but seems to be mediated by the N-terminal domain, and is not inhibited by GPIHBP1. Can inhibit endothelial lipase, causing increased plasma levels of high density lipoprotein (HDL) cholesterol and phospholipids; the cleaved N-terminal domain is more efficient than the uncleaved proprotein. Can bind to adipocytes to activate lipolysis, releasing free fatty acids and glycerol. Suppresses LPL specifically in oxidative tissues which is required to route very low density lipoprotein (VLDL)-TG to white adipose tissue (WAT) for storage in response to food; the function may involve cooperation with circulating, liver-derived ANGPTL8 and ANGPTL4 expression in WAT. Contributes to lower plasma levels of low density lipoprotein (LDL)-cholesterol by a mechanism that is independent of the canonical pathway implicating APOE and LDLR. May stimulate hypothalamic LPL activity. Functionally, involved in angiogenesis. Binds to endothelial cells via integrin alpha-V/beta-3 (ITGAV:ITGB3), activates FAK, MAPK and Akt signaling pathways and induces cell adhesion and cell migration. May increase the motility of podocytes. Secreted from podocytes, may modulate properties of glomerular endothelial cells involving integrin alpha-V/beta-3 and Akt signaling. May induce actin filament rearrangements in podocytes implicating integrin alpha-V/beta-3 and Rac1 activation. Binds to hematopoietic stem cells (HSC) and is involved in the regulation of HSC activity probably implicating down-regulation of IKZF1/IKAROS. This chain is Angiopoietin-related protein 3 (Angptl3), found in Mus musculus (Mouse).